The chain runs to 754 residues: Phosphoribosylformylglycinamidine synthase subunit PurL (754 aa).

H52 is a catalytic residue. Y55 and K95 together coordinate ATP. E97 contacts Mg(2+). Substrate-binding positions include 98–101 (SHNH) and R120. The Proton acceptor role is filled by H99. Residue D121 participates in Mg(2+) binding. Q244 lines the substrate pocket. D272 is a binding site for Mg(2+). 316-318 (ESQ) contacts substrate. ATP is bound by residues N504 and G541. N542 serves as a coordination point for Mg(2+). A substrate-binding site is contributed by S544.

It belongs to the FGAMS family. In terms of assembly, monomer. Part of the FGAM synthase complex composed of 1 PurL, 1 PurQ and 2 PurS subunits.

It localises to the cytoplasm. The catalysed reaction is N(2)-formyl-N(1)-(5-phospho-beta-D-ribosyl)glycinamide + L-glutamine + ATP + H2O = 2-formamido-N(1)-(5-O-phospho-beta-D-ribosyl)acetamidine + L-glutamate + ADP + phosphate + H(+). Its pathway is purine metabolism; IMP biosynthesis via de novo pathway; 5-amino-1-(5-phospho-D-ribosyl)imidazole from N(2)-formyl-N(1)-(5-phospho-D-ribosyl)glycinamide: step 1/2. In terms of biological role, part of the phosphoribosylformylglycinamidine synthase complex involved in the purines biosynthetic pathway. Catalyzes the ATP-dependent conversion of formylglycinamide ribonucleotide (FGAR) and glutamine to yield formylglycinamidine ribonucleotide (FGAM) and glutamate. The FGAM synthase complex is composed of three subunits. PurQ produces an ammonia molecule by converting glutamine to glutamate. PurL transfers the ammonia molecule to FGAR to form FGAM in an ATP-dependent manner. PurS interacts with PurQ and PurL and is thought to assist in the transfer of the ammonia molecule from PurQ to PurL. This Salinibacter ruber (strain DSM 13855 / M31) protein is Phosphoribosylformylglycinamidine synthase subunit PurL.